The sequence spans 355 residues: uncharacterized protein (355 aa).

The N-terminal stretch at 1–21 (MQKKVLFNDIVFVCFPITDNG) is a signal peptide. Residues Asn-20, Asn-78, Asn-87, Asn-156, Asn-159, and Asn-274 are each glycosylated (N-linked (GlcNAc...) asparagine; by host). Over 22-331 (SIIISDIGYS…SSTSFFSRYG (310 aa)) the chain is Virion surface. Positions 288-317 (GSKSTPNGPNGPTPTPSNGPNGPTPVPGIP) are disordered. The segment covering 296–317 (PNGPTPTPSNGPNGPTPVPGIP) has biased composition (pro residues). Asn-320 is a glycosylation site (N-linked (GlcNAc...) asparagine; by host). The helical transmembrane segment at 332–352 (LWIIIAIILLIVIISAVGIYF) threads the bilayer. Residues 353-355 (YLR) are Intravirion-facing.

It is found in the host membrane. Its subcellular location is the virion. This is an uncharacterized protein from Acanthamoeba polyphaga mimivirus (APMV).